The chain runs to 130 residues: DNA-directed RNA polymerase subunit omega (130 aa).

The tract at residues 107–130 (SLDVSQESHDDEIDDQDSGEEVPI) is disordered. The segment covering 115–130 (HDDEIDDQDSGEEVPI) has biased composition (acidic residues).

This sequence belongs to the RNA polymerase subunit omega family. As to quaternary structure, the RNAP catalytic core consists of 2 alpha, 1 beta, 1 beta' and 1 omega subunit. When a sigma factor is associated with the core the holoenzyme is formed, which can initiate transcription.

The catalysed reaction is RNA(n) + a ribonucleoside 5'-triphosphate = RNA(n+1) + diphosphate. In terms of biological role, promotes RNA polymerase assembly. Latches the N- and C-terminal regions of the beta' subunit thereby facilitating its interaction with the beta and alpha subunits. This chain is DNA-directed RNA polymerase subunit omega, found in Wolbachia pipientis subsp. Culex pipiens (strain wPip).